The primary structure comprises 729 residues: Cullin-6 (729 aa).

Positions aspartate 659 to asparagine 720 constitute a Cullin neddylation domain. Lysine 673 participates in a covalent cross-link: Glycyl lysine isopeptide (Lys-Gly) (interchain with G-Cter in NEDD8).

The protein belongs to the cullin family. In terms of assembly, probably interacts with skr-3. In terms of processing, neddylated; which enhances the ubiquitination activity of SCF-like complex.

Its function is as follows. Probable core component of cullin-based SCF-like E3 ubiquitin-protein ligase complexes which mediate the ubiquitination and subsequent proteasomal degradation of target proteins. This Caenorhabditis elegans protein is Cullin-6 (cul-6).